A 459-amino-acid polypeptide reads, in one-letter code: Putrescine aminotransferase (459 aa).

Residues 150-151 (GT) and Gln-274 contribute to the pyridoxal 5'-phosphate site. Lys-300 bears the N6-(pyridoxal phosphate)lysine mark. A pyridoxal 5'-phosphate-binding site is contributed by Thr-332.

It belongs to the class-III pyridoxal-phosphate-dependent aminotransferase family. Putrescine aminotransferase subfamily. Pyridoxal 5'-phosphate serves as cofactor.

The catalysed reaction is an alkane-alpha,omega-diamine + 2-oxoglutarate = an omega-aminoaldehyde + L-glutamate. It carries out the reaction putrescine + 2-oxoglutarate = 1-pyrroline + L-glutamate + H2O. It catalyses the reaction cadaverine + 2-oxoglutarate = 5-aminopentanal + L-glutamate. The protein operates within amine and polyamine degradation; putrescine degradation; 4-aminobutanal from putrescine (transaminase route): step 1/1. In terms of biological role, catalyzes the aminotransferase reaction from putrescine to 2-oxoglutarate, leading to glutamate and 4-aminobutanal, which spontaneously cyclizes to form 1-pyrroline. This is the first step in one of two pathways for putrescine degradation, where putrescine is converted into 4-aminobutanoate (gamma-aminobutyrate or GABA) via 4-aminobutanal. Also functions as a cadaverine transaminase in a a L-lysine degradation pathway to succinate that proceeds via cadaverine, glutarate and L-2-hydroxyglutarate. The sequence is that of Putrescine aminotransferase from Salmonella choleraesuis (strain SC-B67).